Consider the following 222-residue polypeptide: Cytochrome b6 (222 aa).

Residues 39–59 (IFYCLGGITLVCFLVQFATGF) traverse the membrane as a helical segment. Cys42 contacts heme c. Heme b is bound by residues His93 and His107. Transmembrane regions (helical) follow at residues 97–117 (ASMM…TGGF), 123–143 (LTWM…VTGY), and 193–213 (LHTF…FLMI). His194 and His209 together coordinate heme b.

This sequence belongs to the cytochrome b family. PetB subfamily. As to quaternary structure, the 4 large subunits of the cytochrome b6-f complex are cytochrome b6, subunit IV (17 kDa polypeptide, PetD), cytochrome f and the Rieske protein, while the 4 small subunits are PetG, PetL, PetM and PetN. The complex functions as a dimer. It depends on heme b as a cofactor. Heme c serves as cofactor.

It is found in the cellular thylakoid membrane. Functionally, component of the cytochrome b6-f complex, which mediates electron transfer between photosystem II (PSII) and photosystem I (PSI), cyclic electron flow around PSI, and state transitions. The sequence is that of Cytochrome b6 from Crocosphaera subtropica (strain ATCC 51142 / BH68) (Cyanothece sp. (strain ATCC 51142)).